Consider the following 256-residue polypeptide: MEAQKLSAQEIIQFIGNAEKKTRVKVTLSGMPSFKAAGFLAENGRPNFKALANKGIQVLGDFHTHYSLKIIIGDWQAVRPLLSGLTENKDYTLELEGRNSAVPLLDTREINARIEPGAIIRDQVTIGDSAVIMMGAIINIGAEIGEGTMIDMGAILGGRATVGKNSHIGAGAVLAGVIEPASAEPVRVGDNVLVGANAVVIEGVQVGSGSVVAAGAIVTQDVPENVVVAGVPARIIKEIDEKTQQKTALEDALRNL.

It belongs to the transferase hexapeptide repeat family. DapH subfamily.

The enzyme catalyses (S)-2,3,4,5-tetrahydrodipicolinate + acetyl-CoA + H2O = L-2-acetamido-6-oxoheptanedioate + CoA. Its pathway is amino-acid biosynthesis; L-lysine biosynthesis via DAP pathway; LL-2,6-diaminopimelate from (S)-tetrahydrodipicolinate (acetylase route): step 1/3. Functionally, catalyzes the transfer of an acetyl group from acetyl-CoA to tetrahydrodipicolinate. The chain is 2,3,4,5-tetrahydropyridine-2,6-dicarboxylate N-acetyltransferase from Lactococcus lactis subsp. lactis (strain IL1403) (Streptococcus lactis).